A 397-amino-acid chain; its full sequence is Protein shisa-8 (397 aa).

Residues 1–38 form the signal peptide; that stretch reads MARAGARGLLGGRRPPGLRLALALRLALLLARPPSGRA. The Extracellular segment spans residues 39-138; sequence GAPEAQGPAA…APRDPGRERS (100 aa). N-linked (GlcNAc...) asparagine glycosylation is present at N75. The tract at residues 117–136 is disordered; that stretch reads TGRPPARARDTAAPRDPGRE. Residues 123 to 136 show a composition bias toward basic and acidic residues; sequence RARDTAAPRDPGRE. A helical membrane pass occupies residues 139-159; that stretch reads HTAVYAVCGVAALLVLAGIGA. At 160 to 397 the chain is on the cytoplasmic side; that stretch reads RLGLERAHSP…RTNSKTEVTV (238 aa). Disordered stretches follow at residues 182 to 250 and 281 to 303; these read LLKQ…GGSL and FPALEPSPRQPPARAPRPSPDLP. Composition is skewed to pro residues over residues 188–197 and 288–303; these read PQEPLPPTLG and PRQPPARAPRPSPDLP.

The protein belongs to the shisa family. As to quaternary structure, interacts with AMPAR subunits GRIA1 and GRIA2.

It localises to the membrane. Functionally, may regulate trafficking and current kinetics of AMPA-type glutamate receptor (AMPAR) at synapses. This chain is Protein shisa-8, found in Homo sapiens (Human).